The sequence spans 231 residues: Ferredoxin-type protein NapG (231 aa).

The segment at residues 1 to 41 is a signal peptide (tat-type signal); it reads MSRSAKPQNGRRRFLRDVVRTAGGLAAVGVALGLQQQTARA. 4Fe-4S ferredoxin-type domains are found at residues 50–81, 89–121, 130–166, and 177–208; these read GAIN…LATL, TPYF…REIE, LAVL…LELE, and FLPT…VLPL. Residues Cys-61, Cys-64, Cys-67, Cys-71, Cys-99, Cys-102, Cys-107, Cys-111, Cys-139, Cys-147, Cys-150, Cys-154, Cys-186, Cys-189, Cys-192, and Cys-196 each contribute to the [4Fe-4S] cluster site.

[4Fe-4S] cluster serves as cofactor. In terms of processing, exported by the Tat system. The position of the signal peptide cleavage has not been experimentally proven.

It localises to the periplasm. Required for electron transfer from ubiquinol, via NapC, to the periplasmic nitrate reductase NapAB complex. In Escherichia coli (strain K12), this protein is Ferredoxin-type protein NapG (napG).